Consider the following 191-residue polypeptide: Salivary lipocalin (191 aa).

Residues 1–16 (MKLLLLLCLGLTLASS) form the signal peptide. An N-linked (GlcNAc...) asparagine glycan is attached at asparagine 69. Cysteine 84 and cysteine 176 are joined by a disulfide.

The protein belongs to the calycin superfamily. Lipocalin family. Homodimer. In the submaxillary salivary glands of mature male pigs, but absent from that of females. Expression was much lower in submaxillary glands of castrated male pigs than in sexually mature individuals.

The protein resides in the secreted. Functionally, binds pheromones, the pheromones are released from the saliva of males and affect the sexual behavior of females. The protein is Salivary lipocalin (SAL1) of Sus scrofa (Pig).